We begin with the raw amino-acid sequence, 492 residues long: Heat shock factor protein 4 (492 aa).

The DNA-binding element occupies 17-122 (VPAFLGKLWA…LLERVRRKVP (106 aa)). The hydrophobic repeat HR-A/B stretch occupies residues 129-203 (SRWRPEDLSR…GPLQTGPSST (75 aa)). Residues 245 to 322 (LPETTLGLSP…ECDFCVTAPP (78 aa)) are interactions with DUSP26, MAPK1 and MAPK2. The disordered stretch occupies residues 263-282 (SDIPEDSPSPEGHRLSPSGG). Lysine 293 participates in a covalent cross-link: Glycyl lysine isopeptide (Lys-Gly) (interchain with G-Cter in SUMO). Phosphoserine is present on serine 298. Residues 337 to 378 (GSYSPEGPRSVQQPEPRGPREVPDRGTLGLDRGNRSPESLLP) are disordered. Residues 364-389 (LGLDRGNRSPESLLPPMLLRPAPETL) form a hydrophobic repeat HR-C region.

This sequence belongs to the HSF family. Homotrimer. Exhibits constitutive DNA binding and forms trimers even in the absence of stress. Interacts with ALKBH4, DUSP26, MAPK1, MAPK2, MAPK8 and MAP kinase p38. Post-translationally, phosphorylated mainly on serine residues. Phosphorylation on Ser-298 promotes sumoylation on Lys-293. Isoform HSF4B is constitutively sumoylated. Sumoylation represses the transcriptional activity and is promoted by phosphorylation on Ser-298. HSFA is not sumoylated. As to expression, preferentially expressed in brain and lung. Also found in the eye. Slightly detected in liver and skeletal muscle. Isoform B is the major species in various tissues.

The protein localises to the nucleus. Its function is as follows. Heat-shock transcription factor that specifically binds heat shock promoter elements (HSE). Required for denucleation and organelle rupture and degradation that occur during eye lens terminal differentiation, when fiber cells that compose the lens degrade all membrane-bound organelles in order to provide lens with transparency to allow the passage of light. In this process, may regulate denucleation of lens fiber cells in part by activating DNASE2B transcription. May be involved in DNA repair through the transcriptional regulation of RAD51. May up-regulate p53/TP53 protein in eye lens fiber cells, possibly through protein stabilization. In the eye lens, controls the expression of alpha-crystallin B chain/CRYAB and consequently may be involved in the regulation of lysosomal acidification. Functionally, transcriptional repressor. In terms of biological role, transcriptional activator. The polypeptide is Heat shock factor protein 4 (Hsf4) (Mus musculus (Mouse)).